Here is a 262-residue protein sequence, read N- to C-terminus: Cytochrome c oxidase subunit 3 (262 aa).

6 helical membrane-spanning segments follow: residues 39-59 (YTMT…YQWW), 83-103 (GMIL…WAFF), 120-140 (VGII…ILLA), 163-183 (GLFF…YEYI), 201-221 (ATGF…ICFL), and 240-260 (AWYW…IYWW).

The protein belongs to the cytochrome c oxidase subunit 3 family. Component of the cytochrome c oxidase (complex IV, CIV), a multisubunit enzyme composed of a catalytic core of 3 subunits and several supernumerary subunits. The complex exists as a monomer or a dimer and forms supercomplexes (SCs) in the inner mitochondrial membrane with ubiquinol-cytochrome c oxidoreductase (cytochrome b-c1 complex, complex III, CIII).

The protein localises to the mitochondrion inner membrane. The catalysed reaction is 4 Fe(II)-[cytochrome c] + O2 + 8 H(+)(in) = 4 Fe(III)-[cytochrome c] + 2 H2O + 4 H(+)(out). Its function is as follows. Component of the cytochrome c oxidase, the last enzyme in the mitochondrial electron transport chain which drives oxidative phosphorylation. The respiratory chain contains 3 multisubunit complexes succinate dehydrogenase (complex II, CII), ubiquinol-cytochrome c oxidoreductase (cytochrome b-c1 complex, complex III, CIII) and cytochrome c oxidase (complex IV, CIV), that cooperate to transfer electrons derived from NADH and succinate to molecular oxygen, creating an electrochemical gradient over the inner membrane that drives transmembrane transport and the ATP synthase. Cytochrome c oxidase is the component of the respiratory chain that catalyzes the reduction of oxygen to water. Electrons originating from reduced cytochrome c in the intermembrane space (IMS) are transferred via the dinuclear copper A center (CU(A)) of subunit 2 and heme A of subunit 1 to the active site in subunit 1, a binuclear center (BNC) formed by heme A3 and copper B (CU(B)). The BNC reduces molecular oxygen to 2 water molecules using 4 electrons from cytochrome c in the IMS and 4 protons from the mitochondrial matrix. The polypeptide is Cytochrome c oxidase subunit 3 (COIII) (Anopheles quadrimaculatus (Common malaria mosquito)).